We begin with the raw amino-acid sequence, 288 residues long: ATP synthase gamma chain (288 aa).

This sequence belongs to the ATPase gamma chain family. In terms of assembly, F-type ATPases have 2 components, CF(1) - the catalytic core - and CF(0) - the membrane proton channel. CF(1) has five subunits: alpha(3), beta(3), gamma(1), delta(1), epsilon(1). CF(0) has three main subunits: a, b and c.

The protein resides in the cell inner membrane. Its function is as follows. Produces ATP from ADP in the presence of a proton gradient across the membrane. The gamma chain is believed to be important in regulating ATPase activity and the flow of protons through the CF(0) complex. The polypeptide is ATP synthase gamma chain (Actinobacillus pleuropneumoniae serotype 3 (strain JL03)).